Consider the following 649-residue polypeptide: Endoplasmic reticulum membrane protein 65 (649 aa).

The interval 1-55 is disordered; sequence MGSNTSPGQADPLESENESSLTSRFLPNKRDGGKDNESVIPEKEEPDLNEPVLAV. Residues 1-165 are Cytoplasmic-facing; that stretch reads MGSNTSPGQA…LATPYAIEKT (165 aa). Positions 28–43 are enriched in basic and acidic residues; the sequence is NKRDGGKDNESVIPEK. At Ser94 the chain carries Phosphoserine. A helical membrane pass occupies residues 166–186; that stretch reads FLFGWFVSVDSFLYIFTLFPI. The Lumenal segment spans residues 187–302; the sequence is RVLISFFTLS…NFWNPAGWMT (116 aa). An N-linked (GlcNAc...) asparagine glycan is attached at Asn215. Residues 303–323 traverse the membrane as a helical segment; that stretch reads FFYYFAISLAYMVLHTLVLLY. Residues 324–366 are Cytoplasmic-facing; the sequence is QIITLNVTVNSYSNAVLALLMSNQLVEIKGAVFKKFEKENLFQ. A helical transmembrane segment spans residues 367-387; that stretch reads LTCSDVVERFQITIMVIIIFL. Over 388-414 the chain is Lumenal; the sequence is RNLAELYTTSSLDQPLLTFKRLKTLLA. The chain crosses the membrane as a helical span at residues 415–435; the sequence is PFFWVIGSELFVDWLKHAFII. Residues 436–479 are Cytoplasmic-facing; that stretch reads KFNYIKPSIYSRFTDVLCHDYVASGAQLTQTVTGCSQQVARRMG. A helical membrane pass occupies residues 480–500; the sequence is LPVLPLVCVFIRTSMQTWSMF. Residues 501–557 lie on the Lumenal side of the membrane; that stretch reads RSTHSMKQEIAKSIGTIFPTKDNYVYYLPNKEANTYNAGKEASWETLLLSVVRGKSG. Residues 558–578 form a helical membrane-spanning segment; the sequence is IAFLFFMAIMLKLLLGKAILA. Residues 579–649 lie on the Cytoplasmic side of the membrane; the sequence is ITQSRYESMQ…RYAMHSKRIW (71 aa).

This sequence belongs to the TAPT1 family. Interacts with slp1.

It localises to the endoplasmic reticulum membrane. May be involved in membrane protein folding. The sequence is that of Endoplasmic reticulum membrane protein 65 from Schizosaccharomyces pombe (strain 972 / ATCC 24843) (Fission yeast).